The primary structure comprises 832 residues: Protein P (832 aa).

The tract at residues 1–177 (MPLSYQHFRR…FCGSPYSWEQ (177 aa)) is terminal protein domain (TP). Residues 178–335 (ELQHGAESFH…YCLSHIVNLL (158 aa)) are spacer. Residues 241–263 (RRPFGVEPSGSGHTTNLASKSAS) are disordered. Residues 251–263 (SGHTTNLASKSAS) are compositionally biased toward polar residues. Residues 336–679 (EDWGPCAEHG…YLNLYPVARQ (344 aa)) are polymerase/reverse transcriptase domain (RT). The region spanning 346–589 (EHHIRIPRTP…YSLHFMGYVI (244 aa)) is the Reverse transcriptase domain. Residues Asp418, Asp540, and Asp541 each contribute to the Mg(2+) site.

The protein belongs to the hepadnaviridae P protein family.

The enzyme catalyses DNA(n) + a 2'-deoxyribonucleoside 5'-triphosphate = DNA(n+1) + diphosphate. It carries out the reaction Endonucleolytic cleavage to 5'-phosphomonoester.. With respect to regulation, activated by host HSP70 and HSP40 in vitro to be able to bind the epsilon loop of the pgRNA. Because deletion of the RNase H region renders the protein partly chaperone-independent, the chaperones may be needed indirectly to relieve occlusion of the RNA-binding site by this domain. Inhibited by several reverse-transcriptase inhibitors: Lamivudine, Adefovir and Entecavir. Its function is as follows. Multifunctional enzyme that converts the viral RNA genome into dsDNA in viral cytoplasmic capsids. This enzyme displays a DNA polymerase activity that can copy either DNA or RNA templates, and a ribonuclease H (RNase H) activity that cleaves the RNA strand of RNA-DNA heteroduplexes in a partially processive 3'- to 5'-endonucleasic mode. Neo-synthesized pregenomic RNA (pgRNA) are encapsidated together with the P protein, and reverse-transcribed inside the nucleocapsid. Initiation of reverse-transcription occurs first by binding the epsilon loop on the pgRNA genome, and is initiated by protein priming, thereby the 5'-end of (-)DNA is covalently linked to P protein. Partial (+)DNA is synthesized from the (-)DNA template and generates the relaxed circular DNA (RC-DNA) genome. After budding and infection, the RC-DNA migrates in the nucleus, and is converted into a plasmid-like covalently closed circular DNA (cccDNA). The activity of P protein does not seem to be necessary for cccDNA generation, and is presumably released from (+)DNA by host nuclear DNA repair machinery. The sequence is that of Protein P from Homo sapiens (Human).